Reading from the N-terminus, the 261-residue chain is Short-chain-enoyl-CoA hydratase (261 aa).

The Nucleophile role is filled by glutamate 114. Glutamate 134 (proton acceptor) is an active-site residue.

Belongs to the enoyl-CoA hydratase/isomerase family. As to quaternary structure, homotetramer.

It carries out the reaction a short-chain (3S)-3-hydroxyacyl-CoA = a short-chain (2E)-enoyl-CoA + H2O. The protein operates within lipid metabolism; butanoate metabolism. Catalyzes the reversible hydration of crotonyl-CoA. Can also use hexenoyl-CoA but not higher analogs. In Clostridium acetobutylicum (strain ATCC 824 / DSM 792 / JCM 1419 / IAM 19013 / LMG 5710 / NBRC 13948 / NRRL B-527 / VKM B-1787 / 2291 / W), this protein is Short-chain-enoyl-CoA hydratase (crt).